The chain runs to 100 residues: NADH-quinone oxidoreductase subunit K (100 aa).

Helical transmembrane passes span 1–21 (MIGL…GLAG), 28–48 (ILLL…GFIA), and 64–84 (FIIA…ILWF).

The protein belongs to the complex I subunit 4L family. As to quaternary structure, NDH-1 is composed of 14 different subunits. Subunits NuoA, H, J, K, L, M, N constitute the membrane sector of the complex.

It localises to the cell inner membrane. The catalysed reaction is a quinone + NADH + 5 H(+)(in) = a quinol + NAD(+) + 4 H(+)(out). Functionally, NDH-1 shuttles electrons from NADH, via FMN and iron-sulfur (Fe-S) centers, to quinones in the respiratory chain. The immediate electron acceptor for the enzyme in this species is believed to be ubiquinone. Couples the redox reaction to proton translocation (for every two electrons transferred, four hydrogen ions are translocated across the cytoplasmic membrane), and thus conserves the redox energy in a proton gradient. The chain is NADH-quinone oxidoreductase subunit K from Helicobacter acinonychis (strain Sheeba).